The chain runs to 244 residues: UDP-2,3-diacylglucosamine hydrolase (244 aa).

Positions 8, 10, 41, 79, and 114 each coordinate Mn(2+). 79 to 80 (NR) provides a ligand contact to substrate. Substrate is bound by residues Asp-122, Lys-164, Lys-167, and His-195. Positions 195 and 197 each coordinate Mn(2+).

This sequence belongs to the LpxH family. The cofactor is Mn(2+).

Its subcellular location is the cell inner membrane. The enzyme catalyses UDP-2-N,3-O-bis[(3R)-3-hydroxytetradecanoyl]-alpha-D-glucosamine + H2O = 2-N,3-O-bis[(3R)-3-hydroxytetradecanoyl]-alpha-D-glucosaminyl 1-phosphate + UMP + 2 H(+). The protein operates within glycolipid biosynthesis; lipid IV(A) biosynthesis; lipid IV(A) from (3R)-3-hydroxytetradecanoyl-[acyl-carrier-protein] and UDP-N-acetyl-alpha-D-glucosamine: step 4/6. Its function is as follows. Hydrolyzes the pyrophosphate bond of UDP-2,3-diacylglucosamine to yield 2,3-diacylglucosamine 1-phosphate (lipid X) and UMP by catalyzing the attack of water at the alpha-P atom. Involved in the biosynthesis of lipid A, a phosphorylated glycolipid that anchors the lipopolysaccharide to the outer membrane of the cell. This Vibrio atlanticus (strain LGP32) (Vibrio splendidus (strain Mel32)) protein is UDP-2,3-diacylglucosamine hydrolase.